We begin with the raw amino-acid sequence, 291 residues long: Arabinogalactan O-methyltransferase 2 (291 aa).

The helical transmembrane segment at 18–38 threads the bilayer; that stretch reads WFLAVALAGLIGGAMLITSFI.

This sequence belongs to the methyltransferase superfamily.

The protein localises to the golgi apparatus membrane. In terms of biological role, involved in the methylation of glucuronic acid of different plant cell wall component, but mainly on side chains of arabinogalactans. This is Arabinogalactan O-methyltransferase 2 from Arabidopsis thaliana (Mouse-ear cress).